The primary structure comprises 187 residues: Large ribosomal subunit protein uL5 (187 aa).

Belongs to the universal ribosomal protein uL5 family. Part of the 50S ribosomal subunit; part of the 5S rRNA/L5/L18/L25 subcomplex. Contacts the 5S rRNA and the P site tRNA. Forms a bridge to the 30S subunit in the 70S ribosome.

In terms of biological role, this is one of the proteins that bind and probably mediate the attachment of the 5S RNA into the large ribosomal subunit, where it forms part of the central protuberance. In the 70S ribosome it contacts protein S13 of the 30S subunit (bridge B1b), connecting the 2 subunits; this bridge is implicated in subunit movement. Contacts the P site tRNA; the 5S rRNA and some of its associated proteins might help stabilize positioning of ribosome-bound tRNAs. This chain is Large ribosomal subunit protein uL5, found in Corynebacterium diphtheriae (strain ATCC 700971 / NCTC 13129 / Biotype gravis).